We begin with the raw amino-acid sequence, 234 residues long: Phosphoglycolate phosphatase (234 aa).

Residue Asp-9 is the Nucleophile of the active site. Mg(2+) is bound by residues Asp-9 and Asp-11. Position 162 (Lys-162) interacts with substrate. Residues Asp-185 and Asp-189 each coordinate Mg(2+).

This sequence belongs to the archaeal SPP-like hydrolase family. The cofactor is Mg(2+).

It carries out the reaction 2-phosphoglycolate + H2O = glycolate + phosphate. Catalyzes the dephosphorylation of 2-phosphoglycolate. The protein is Phosphoglycolate phosphatase of Methanobrevibacter smithii (strain ATCC 35061 / DSM 861 / OCM 144 / PS).